An 87-amino-acid polypeptide reads, in one-letter code: Large ribosomal subunit protein eL34 (87 aa).

It belongs to the eukaryotic ribosomal protein eL34 family.

The chain is Large ribosomal subunit protein eL34 from Sulfurisphaera tokodaii (strain DSM 16993 / JCM 10545 / NBRC 100140 / 7) (Sulfolobus tokodaii).